The primary structure comprises 1011 residues: Histone deacetylase 9 (1011 aa).

Phosphoserine is present on Ser22. The tract at residues 23-27 (PLDLR) is interaction with CTBP1. Disordered stretches follow at residues 110-139 (RQEQ…RAVA), 183-249 (TSLD…KDGN), and 262-304 (TESS…EQMV). Residues 136–154 (RAVASTEVKQKLQEFLLSK) form an interaction with MEF2 region. The tract at residues 175–343 (LWYTAAHHTS…LPAVPSQLNA (169 aa)) is interaction with MAPK10. The segment covering 185 to 199 (LDQSSPPLSGTSPSY) has biased composition (polar residues). Basic and acidic residues predominate over residues 208–219 (DAKDDFPLRKTA). The interval 218–261 (TASEPNLKVRSRLKQKVAERRSSPLLRRKDGNVVTSFKKRMFEV) is interaction with ETV6. Ser220 and Ser240 each carry phosphoserine. Over residues 233 to 248 (KVAERRSSPLLRRKDG) the composition is skewed to basic and acidic residues. Residues 262-285 (TESSVSSSSPGSGPSSPNNGPTGS) are compositionally biased toward low complexity. Ser451 carries the phosphoserine modification. Positions 494 to 536 (QLKQPGSHLEEAEEELQGDQAMQEDRAPSSGNSTRSDSSACVD) are disordered. Residues 522–532 (SSGNSTRSDSS) show a composition bias toward polar residues. Residue Ser554 is modified to Phosphoserine. Positions 631-978 (SATGIAYDPL…VNALLGNELE (348 aa)) are histone deacetylase. The Zn(2+) site is built by Cys646, Cys648, His654, and Cys731. The active site involves His783.

It belongs to the histone deacetylase family. HD type 2 subfamily. As to quaternary structure, homodimer. Interacts with CTBP1. The phosphorylated form interacts with 14-3-3. Interacts with HDAC1 and HDAC3, and probably with HDAC4 and HDAC5. Interacts with MEF2, MAPK10, ETV6, NCOR1 and BCL6. Interacts with FOXP3 in the absence of T-cell stimulation. Phosphorylated on Ser-220 and Ser-450; which promotes 14-3-3-binding, impairs interaction with MEF2, and antagonizes antimyogenic activity. Phosphorylated on Ser-240; which impairs nuclear accumulation. Isoform 7 is phosphorylated on Tyr-1010. Phosphorylated by the PKC kinases PKN1 and PKN2, impairing nuclear import. In terms of processing, sumoylated. In terms of tissue distribution, broadly expressed, with highest levels in brain, heart, muscle and testis. Isoform 3 is present in human bladder carcinoma cells (at protein level).

Its subcellular location is the nucleus. The catalysed reaction is N(6)-acetyl-L-lysyl-[histone] + H2O = L-lysyl-[histone] + acetate. With respect to regulation, inhibited by Trichostatin A (TSA) and suberoylanilide hydroxamic acid. Functionally, responsible for the deacetylation of lysine residues on the N-terminal part of the core histones (H2A, H2B, H3 and H4). Histone deacetylation gives a tag for epigenetic repression and plays an important role in transcriptional regulation, cell cycle progression and developmental events. Represses MEF2-dependent transcription. In terms of biological role, isoform 3 lacks active site residues and therefore is catalytically inactive. Represses MEF2-dependent transcription by recruiting HDAC1 and/or HDAC3. Seems to inhibit skeletal myogenesis and to be involved in heart development. Protects neurons from apoptosis, both by inhibiting JUN phosphorylation by MAPK10 and by repressing JUN transcription via HDAC1 recruitment to JUN promoter. This Homo sapiens (Human) protein is Histone deacetylase 9 (HDAC9).